The sequence spans 355 residues: Molybdenum import ATP-binding protein ModC (355 aa).

In terms of domain architecture, ABC transporter spans 1-233; that stretch reads MTLIVEAKQR…PSAAADRKEA (233 aa). Position 31–38 (31–38) interacts with ATP; that stretch reads GRSGSGKT. A Mop domain is found at 291–355; it reads GLSALNILEG…AIIKTVALEG (65 aa).

This sequence belongs to the ABC transporter superfamily. Molybdate importer (TC 3.A.1.8) family. The complex is composed of two ATP-binding proteins (ModC), two transmembrane proteins (ModB) and a solute-binding protein (ModA).

The protein localises to the cell inner membrane. The enzyme catalyses molybdate(out) + ATP + H2O = molybdate(in) + ADP + phosphate + H(+). In terms of biological role, part of the ABC transporter complex ModABC involved in molybdenum import. Responsible for energy coupling to the transport system. The protein is Molybdenum import ATP-binding protein ModC of Rhizobium etli (strain ATCC 51251 / DSM 11541 / JCM 21823 / NBRC 15573 / CFN 42).